The chain runs to 227 residues: LexA repressor (227 aa).

A DNA-binding region (H-T-H motif) is located at residues 26–46 (FDEMKEALDLASKSGIHRLIT). Catalysis depends on for autocatalytic cleavage activity residues Ser147 and Lys185.

The protein belongs to the peptidase S24 family. Homodimer.

It catalyses the reaction Hydrolysis of Ala-|-Gly bond in repressor LexA.. Functionally, represses a number of genes involved in the response to DNA damage (SOS response), including recA and lexA. In the presence of single-stranded DNA, RecA interacts with LexA causing an autocatalytic cleavage which disrupts the DNA-binding part of LexA, leading to derepression of the SOS regulon and eventually DNA repair. This chain is LexA repressor, found in Hyphomonas neptunium (strain ATCC 15444).